A 190-amino-acid polypeptide reads, in one-letter code: Acyl-acyl carrier protein thioesterase ATL3, chloroplastic (190 aa).

The N-terminal 49 residues, 1–49, are a transit peptide targeting the chloroplast; sequence MFLQVTGTATPAMPAVVFLNSWRRPLSIPLRSVKTFKPLAFFDLKGGKG. Asp-66 is a catalytic residue.

Belongs to the 4-hydroxybenzoyl-CoA thioesterase family. As to expression, highly expressed in stems and flowers and at lower levels in rosette leaves, cauline leaves and siliques.

It is found in the plastid. It localises to the chloroplast. In terms of biological role, acyl-ACP thioesterase involved in the production of fatty acids and beta-keto fatty acids. Can produce fatty acids of long chain (14:1 and 16:1) and beta-keto fatty acids of medium to long chain (8:0, 10:0, 12:0, 12:1, 14:0 and 16:0) when expressed in a heterologous organism (E.coli). Possesses thioesterase activity for lauroyl-ACP (12:0-ACP) in vitro. May play a role in the generation of long fatty acids in the chloroplast. This is Acyl-acyl carrier protein thioesterase ATL3, chloroplastic from Arabidopsis thaliana (Mouse-ear cress).